We begin with the raw amino-acid sequence, 612 residues long: Vitamin B12 transporter BtuB (612 aa).

The N-terminal stretch at 1–20 (MIKKSLLCTALSVTAFSGWA) is a signal peptide. A TonB box motif is present at residues 26-33 (DTLVVTAN). Residues 38-152 (PRSAVLAPIT…IGGVVNIITT (115 aa)) enclose the TBDR plug domain. Residues Ser85, Asn92, and 110-111 (VS) contribute to the cyanocob(III)alamin site. A TBDR beta-barrel domain is found at 155–612 (KPGTELTAGV…EYTLSGSYTF (458 aa)). 3 beta stranded membrane passes run 158-165 (TELTAGVG), 169-178 (YQNYDVSTQQ), and 184-195 (TRVTLMGDYAYT). Ca(2+) contacts are provided by Asp199, Gln211, Asp213, and Asp215. 2 consecutive transmembrane segments (beta stranded) span residues 217 to 227 (FLSKTLYGALE) and 232 to 248 (DTWS…NRTN). 3 residues coordinate Ca(2+): Tyr249, Asp250, and Asp261. Beta stranded transmembrane passes span 263 to 277 (RKLY…LRFN), 279 to 296 (ELIQ…KDYN), 309 to 325 (TLDE…NSIV), 328 to 337 (HGNVGAGVDW), 353 to 369 (YDQR…QQLG), 371 to 381 (FTFEGAARSDD), 385 to 400 (FGRH…WEFI), 403 to 417 (YRFI…KAPN), 434 to 443 (QSKQWEGAFE), 449 to 458 (VNWRVSGYRN), 473 to 490 (YFNE…TANF), 494 to 509 (PLAH…SRNA), 517 to 529 (RRSK…QLDW), and 535 to 550 (DWGL…YDTD). Residue Thr309 coordinates cyanocob(III)alamin. Cyanocob(III)alamin is bound at residue Arg517. Residue Tyr551 coordinates cyanocob(III)alamin. 3 beta stranded membrane passes run 556 to 570 (PVKM…LAVS), 583 to 594 (IANRFDKDYETV), and 600 to 612 (AGRE…SYTF). Positions 595–612 (YGYATAGREYTLSGSYTF) match the TonB C-terminal box motif.

This sequence belongs to the TonB-dependent receptor family. BtuB (TC 1.B.14.3.1) subfamily.

The protein resides in the cell outer membrane. In terms of biological role, involved in the active translocation of vitamin B12 (cyanocobalamin) across the outer membrane to the periplasmic space. It derives its energy for transport by interacting with the trans-periplasmic membrane protein TonB. The chain is Vitamin B12 transporter BtuB from Citrobacter freundii.